A 131-amino-acid chain; its full sequence is Ribosomally synthesized cyclic peptide phomopsin precursor gigA (131 aa).

A signal peptide spans 1–18; it reads MQFTLIFFYATLAAFGLA. Propeptides lie at residues 19 to 38, 48 to 65, 75 to 92, 102 to 119, and 129 to 131; these read APSEQVGRDVVQEGDELDKR, ADLVDGDDVQEGDKLDKR, ADMVDGDDVQEGDKLDKR, ADMVDGDDVQEGDELAKR, and ADM.

GigA is processed by several endopeptidases including kexin proteases to produce 2 identical copies of the nonaxapeptide Ile-Asn-Phe-Lys-Ile-Pro-Tyr-Thr-Gly, one copy of the nonaketide Ile-Gly-Phe-Lys-Leu-Pro-Tyr-Arg-Gly and one copy of the nonaketide Pro-Asn-Phe-Lys-Met-Pro-Tyr-Arg-Gly, that are further modified into phomapsins B, C and A, respectively. After being excised from the precursor peptide, the core peptides are cyclized and modified post-translationally by enzymes encoded within the gene cluster. Epichloecyclin biosynthesis requires only dimethylation of the side-chain amino group of the conserved lysine for completion.

The protein operates within mycotoxin biosynthesis. Its function is as follows. Ribosomally synthesized cyclic peptide phomopsin precursor; part of the gene cluster that mediates the biosynthesis of the epichloecyclins, a group of nonapeptides, with a likely cyclic structure and dimethylation of the conserved lysine. The gigA translated product contains 4 repeated peptide embedding the nonapeptide Ile-Asn-Phe-Lys-Ile-Pro-Tyr-Thr-Gly in repeats 1 and 2, Ile-Gly-Phe-Lys-Leu-Pro-Tyr-Arg-Gly in repeat 3, and Pro-Asn-Phe-Lys-Met-Pro-Tyr-Arg-Gly in repeat 4 that are converted into epichloecyclins B, C and A, respectively. Moreover, removal of the last Gly residue in epichloecyclins B and C leads to epichloecyclins D and E, respectively. The sequence is that of Ribosomally synthesized cyclic peptide phomopsin precursor gigA (nc25) from Epichloe festucae (strain Fl1).